Reading from the N-terminus, the 275-residue chain is MGIKAYKPTSPGRRQMTVLTFEEITKKEPEKSLLAPLTKKAGRNVYGRITVRHRGGGHKRRYRIIDFKRDKDGIPGKVAAIEYDPNRTAFIALIHYADGEKRYIIAPHGLKVGDIVESGENVDIKVGNALPLRNIPVGTIVHNIELIPGKGGQLVRAAGAAAQLMAKEGDYVHIRMPSGEIRLINANCRATIGQVSNIDHENVKIGKAGRSRWLGIRPTVRGSAMNPVDHPHGGGEGKAPIGHPGPLTPWGKPALGYKTRKKGKASDKFIVKRRK.

Residues 224–275 (AMNPVDHPHGGGEGKAPIGHPGPLTPWGKPALGYKTRKKGKASDKFIVKRRK) are disordered. Residues 264-275 (KASDKFIVKRRK) are compositionally biased toward basic and acidic residues.

The protein belongs to the universal ribosomal protein uL2 family. Part of the 50S ribosomal subunit. Forms a bridge to the 30S subunit in the 70S ribosome.

Its function is as follows. One of the primary rRNA binding proteins. Required for association of the 30S and 50S subunits to form the 70S ribosome, for tRNA binding and peptide bond formation. It has been suggested to have peptidyltransferase activity; this is somewhat controversial. Makes several contacts with the 16S rRNA in the 70S ribosome. This is Large ribosomal subunit protein uL2 from Caldanaerobacter subterraneus subsp. tengcongensis (strain DSM 15242 / JCM 11007 / NBRC 100824 / MB4) (Thermoanaerobacter tengcongensis).